A 281-amino-acid polypeptide reads, in one-letter code: Bifunctional protein FolD (281 aa).

Residues 165–167 (GRG), T192, and V233 each bind NADP(+).

It belongs to the tetrahydrofolate dehydrogenase/cyclohydrolase family. As to quaternary structure, homodimer.

It carries out the reaction (6R)-5,10-methylene-5,6,7,8-tetrahydrofolate + NADP(+) = (6R)-5,10-methenyltetrahydrofolate + NADPH. The catalysed reaction is (6R)-5,10-methenyltetrahydrofolate + H2O = (6R)-10-formyltetrahydrofolate + H(+). It participates in one-carbon metabolism; tetrahydrofolate interconversion. Its function is as follows. Catalyzes the oxidation of 5,10-methylenetetrahydrofolate to 5,10-methenyltetrahydrofolate and then the hydrolysis of 5,10-methenyltetrahydrofolate to 10-formyltetrahydrofolate. This Mycobacterium avium (strain 104) protein is Bifunctional protein FolD.